A 1386-amino-acid chain; its full sequence is DNA-directed RNA polymerase subunit beta'' (1386 aa).

Residues cysteine 220, cysteine 289, cysteine 296, and cysteine 299 each contribute to the Zn(2+) site.

It belongs to the RNA polymerase beta' chain family. RpoC2 subfamily. As to quaternary structure, in plastids the minimal PEP RNA polymerase catalytic core is composed of four subunits: alpha, beta, beta', and beta''. When a (nuclear-encoded) sigma factor is associated with the core the holoenzyme is formed, which can initiate transcription. Zn(2+) is required as a cofactor.

Its subcellular location is the plastid. It is found in the chloroplast. The enzyme catalyses RNA(n) + a ribonucleoside 5'-triphosphate = RNA(n+1) + diphosphate. Functionally, DNA-dependent RNA polymerase catalyzes the transcription of DNA into RNA using the four ribonucleoside triphosphates as substrates. In Marchantia polymorpha (Common liverwort), this protein is DNA-directed RNA polymerase subunit beta''.